Consider the following 1380-residue polypeptide: MSSSVTSKYVLNSFSSVPRLSYAKSIDIKDSLTDLIKIQRDSYNAFIGIDQDVDSGIKNIFQSMFPIQDLLGRAVLQFVSYSIGEPQYDEYECIKRGITYSVPIRIVLRFIVWKVQEVSFKEVKYVVDEETSEKSIKYIKEQEVSIGDLPTMTSYGTFIINGVERVIVSQMHRSPGVFFDSDKGKTYSSGKLIYLARIIPYRGSWLDFEFDIKDILYFRIDRKRKLPVSLLLRALGLSNSEILDTFYDKIRYERCENGWVVPFVVDRFRGVRLSYDLVDIDGNVLVKANTRITLRLAKKLASDGLKKYLVPFAEIQGLFIANDLVDPASNVMIMCAGESITSEHINKLKLFDINEIFILNIDFLTVGPYILNTLFLDKNISYEDALFEIYKVLRSGESPSLDTMKAFFDGLFFEKERYDLSTVGRIKLNDHLGLDISEDVTVLTKDDIIHVIKKLVLLRDGEGFVDDIDHLGNRRVRSVGEFIENQFRIGILRLERMIMDYMSSVNFDNAMPCDFVNPKVLATVLKDFFSSSQLSQFMDQTNPLSEVTHKRRLSALGPGGLTRERAGFEVRDVHPTHYGRICPIETPEGQNIGLISSLAIYARINKHGFIESPYRKVDNGVVTDKVEYLLAMQESNYYIADASATLDENNRFVDDMLYCRHDGNFVMVKREQVDYIDVSPKQIVSVAASLIPFLENNDANRALMGSNMQRQAVPLLKADAPLVGTGMESIVAAGSGTVVLAKRSGIVHRVDGLYIVIRAFDKEKNEYLGVDIYNLRKFQRSNHNTCINQKPLVKPGDYVRENDVIADGSAIDQGELALGKNVLVAFMSWQGYNFEDSIVISSEVVKKDVFTSIHIEEFECVVRDTALGPEKIMRSIPDVNEDSLSHLDDVGIVNVGAEVSAGDILVGKVTPRPPVSLPPETKLLVTIFGEKVFDCVDSSLYLPIDVEGTVVDVHVFVRRGVEENDRSLLIKQNEINGFIKERDYEIDVVSEYFYDELKRVLVNTNTEYNNQNIEDYLKSIPQKSWWDIKLSDESVLSQISDLKEKFDSMIENAHSKFDQKIDKLNYGYDLPQGVLCIVKVFVAVKHNLQPGDKMAGRHGNKGVISRIVPVEDMPYLEDGTPVDIILNSLGVPSRMNVGQILETHLGWASVNLGKKIGNILDNIDELTIAHLRNFLDQVYDGQDLKYSIRSMSDDDLLAFAERLRDGVPMAAPVFEGPKDNQISNLLKLADLDVSGQVDLYDGRIGEKFDRKVTVGYIYMLKLHHLVDDKIHARSVGPYGLVTQQPLGGKSHFGGQRFGEMECWALQAYGAAYTLQEMLTVKSDDIVGRVKIYESIIKGDSNFECGIPESFNVMVKELRSLCLDVALKQDKDFLHDRKINN.

This sequence belongs to the RNA polymerase beta chain family. In terms of assembly, the RNAP catalytic core consists of 2 alpha, 1 beta, 1 beta' and 1 omega subunit. When a sigma factor is associated with the core the holoenzyme is formed, which can initiate transcription.

The enzyme catalyses RNA(n) + a ribonucleoside 5'-triphosphate = RNA(n+1) + diphosphate. In terms of biological role, DNA-dependent RNA polymerase catalyzes the transcription of DNA into RNA using the four ribonucleoside triphosphates as substrates. The chain is DNA-directed RNA polymerase subunit beta from Ehrlichia ruminantium (strain Welgevonden).